A 399-amino-acid chain; its full sequence is Vitamin K-dependent protein Z (399 aa).

An N-terminal signal peptide occupies residues 1–22 (MAGCILLLRGFILTLILHQVEL). Residues 23–40 (SVFLPAPKANNVLRRWRR) constitute a propeptide that is removed on maturation. One can recognise a Gla domain in the interval 41-86 (GSSYFLEEIFQGNLEKECYEEVCNYEEAREVFENDVITDEFWRQYG). 11 positions are modified to 4-carboxyglutamate: Glu47, Glu48, Glu55, Glu57, Glu60, Glu61, Glu66, Glu67, Glu70, Glu73, and Glu80. Cysteines 58 and 63 form a disulfide. 2 EGF-like domains span residues 87-123 (GGSP…KTCA) and 125-166 (AKNE…KSCG). Cystine bridges form between Cys91/Cys102, Cys96/Cys111, Cys113/Cys122, Cys129/Cys141, Cys137/Cys150, Cys152/Cys165, and Cys208/Cys224. N-linked (GlcNAc...) asparagine glycosylation is present at Asn99. (3R)-3-hydroxyaspartate is present on Asp104. One can recognise a Peptidase S1 domain in the interval 172-399 (ACGALTSEHI…YSMWFKQIMK (228 aa)). Residues Asn230, Asn305, and Asn331 are each glycosylated (N-linked (GlcNAc...) asparagine). A disulfide bridge links Cys326 with Cys340.

The protein belongs to the peptidase S1 family. In terms of processing, the iron and 2-oxoglutarate dependent 3-hydroxylation of aspartate and asparagine is (R) stereospecific within EGF domains. As to expression, plasma.

Its subcellular location is the secreted. Appears to assist hemostasis by binding thrombin and promoting its association with phospholipid vesicles. Inhibits activity of the coagulation protease factor Xa in the presence of SERPINA10, calcium and phospholipids. This Mus musculus (Mouse) protein is Vitamin K-dependent protein Z (Proz).